Consider the following 206-residue polypeptide: Cytochrome c oxidase assembly protein CtaG (206 aa).

Topologically, residues 1-22 (MTEQPTNRNDVPRRGLGRDATV) are cytoplasmic. A helical; Signal-anchor for type II membrane protein membrane pass occupies residues 23-43 (ASICGLVVALMVGASYAAVPF). The Periplasmic segment spans residues 44-206 (YNWFCRATGF…GEPDSRKGAL (163 aa)).

It belongs to the COX11/CtaG family.

The protein localises to the cell inner membrane. Its function is as follows. Exerts its effect at some terminal stage of cytochrome c oxidase synthesis, probably by being involved in the insertion of the copper B into subunit I. This chain is Cytochrome c oxidase assembly protein CtaG, found in Rhodopseudomonas palustris (strain BisB18).